Reading from the N-terminus, the 736-residue chain is MEFVSGYRDEFLDFAALLFGWFRKFVAERGTMGTSLEGRWRQLESQIRRLPQDPALWVLHVLPNRSVGISLGQGAEPGPGPGLGASRLLGDEPPLHLRDLSPYVSFVSLEDGEEGEEEEEDEEHGERPGMEKVEPQEGGEPAPPSKRFPQEAKPAPESEVTQQEASREEGSREERPEDERAPEKRKGQKNAEAAPLHLSCLLLVTDEHGTILGIDLLMDGAQGSVGQNPGTENLAPRAYALLCHSMACPMGSGDPRKPRQLTVGDAHLHRELESLVPRLGVKLAKTPMRTWGPRPGFTFASLRARTCHVCHKHSFEVKLTPCPQCSAVLYCGEACLQADWRRCPDDVSHRFWCPRLSAFMERVGELASLPFTYTAEVTSETFNKEAFLASRGLTRGYWTQLSMLIPGPGAPRYPWGSTSSLSCLLNGDPYQLLQGDGPALMPPVPLEPPRSLFGSWQDYYTWRGLSLDSPMAVLLTYPLTVYYVITHLVPQSFPELNIQNKQSLKIHVVEAGKEFDLVMVFWELLVLLPHVALELQFVGDSLPPESDQQHFTMQRDGPEVSLRPGSGVSARFNSGTKEKGGRRDLQIRVSARPYHLLQGPKPDLVIGFNSGFGLKDTWLSSLPRLQSLRVPAFFTESSEYGCVMDDQTMAVATGGGTSSPQPNPFRSPFRLRAADNCMPWYCNAFIFHLVYKPPQGGTVRSAPGPAPRPPTPAAPPVPARRRRGEKKAARGPRRRR.

Disordered stretches follow at residues 70-94 (SLGQ…DEPP) and 109-192 (LEDG…KNAE). Acidic residues predominate over residues 110 to 123 (EDGEEGEEEEEDEE). 2 stretches are compositionally biased toward basic and acidic residues: residues 124–135 (HGERPGMEKVEP) and 165–185 (ASRE…PEKR). Zn(2+)-binding residues include cysteine 307, cysteine 310, cysteine 322, cysteine 325, cysteine 331, cysteine 335, histidine 349, and cysteine 353. The segment at 307 to 353 (CHVCHKHSFEVKLTPCPQCSAVLYCGEACLQADWRRCPDDVSHRFWC) adopts an MYND-type zinc-finger fold. Disordered regions lie at residues 556–583 (DGPE…GGRR) and 696–736 (GGTV…RRRR). Residues 704-718 (GPAPRPPTPAAPPVP) show a composition bias toward pro residues. Over residues 719-736 (ARRRRGEKKAARGPRRRR) the composition is skewed to basic residues.

Interacts with HDAC1, HDAC3, HDAC6 and, to a lesser extent, with HDAC7. Testis-specific. Expressed in pachytene spermatocytes and all developing spermatids, but not in Sertoli, nor Leydig cells (at protein level).

It is found in the nucleus. Its subcellular location is the cytoplasm. Functionally, acts as a transcriptional repressor through interaction with histone deacetylases (HDACs). May regulate haploid genes important for spermiogenesis. The chain is Zinc finger MYND domain-containing protein 15 (Zmynd15) from Mus musculus (Mouse).